The primary structure comprises 317 residues: uncharacterized protein (317 aa).

To A.aeolicus AA11 and AA34.

This is an uncharacterized protein from Aquifex aeolicus (strain VF5).